A 209-amino-acid polypeptide reads, in one-letter code: MIFPIFFTFFLLLSSSHASVQDFCVADYKAPDGPAGYSCKKPAKVTINDFVYSGLGIAGNTTNIIKAAVTPAFAAQFPGVNGLGISLARLDLGPGGVIPFHTHPGASEVLLVVQGTIIAGFVASDNTPYLKTLKKGDIMVFPQGLLHFQVNGGGTPALAFPSFSSPSPGLQILDFALFKNDLPTELIAQTTFLDAAQIKKLKGVLGGTN.

An N-terminal signal peptide occupies residues 1–18 (MIFPIFFTFFLLLSSSHA). Cys24 and Cys39 are joined by a disulfide. In terms of domain architecture, Cupin type-1 spans 53 to 199 (SGLGIAGNTT…TTFLDAAQIK (147 aa)). Residue Asn60 is glycosylated (N-linked (GlcNAc...) asparagine). Residues His101, His103, Glu108, and His147 each contribute to the Mn(2+) site.

The protein belongs to the germin family. In terms of assembly, interacts with ABP20.

Its subcellular location is the secreted. The protein localises to the extracellular space. It is found in the apoplast. The protein resides in the cell wall. Functionally, probable receptor for the plant growth-promoting hormone auxin. The polypeptide is Auxin-binding protein ABP19a (ABP19A) (Prunus persica (Peach)).